The chain runs to 274 residues: NADH-ubiquinone oxidoreductase chain 2 (274 aa).

8 helical membrane passes run 28 to 48, 54 to 74, 79 to 99, 107 to 127, 128 to 148, 171 to 191, 206 to 226, and 254 to 274; these read MIIMSALLLKSGAAPFHFWFP, LTWMNALVLMTWQKIAPLMLI, IKYLLLISVILSVIIGAIGGL, LMAFSSINHLGWMLSSLMISE, SIWLIYFFFYSFLSFVLTFMF, FTLFMNFLSLGGLPPFLGFLP, FLLLLMMMSTLITLFFYLRIC, and LIMTFFSIFGLFMISLFYFMF.

It belongs to the complex I subunit 2 family.

The protein localises to the mitochondrion inner membrane. The enzyme catalyses a ubiquinone + NADH + 5 H(+)(in) = a ubiquinol + NAD(+) + 4 H(+)(out). Functionally, core subunit of the mitochondrial membrane respiratory chain NADH dehydrogenase (Complex I) that is believed to belong to the minimal assembly required for catalysis. Complex I functions in the transfer of electrons from NADH to the respiratory chain. The immediate electron acceptor for the enzyme is believed to be ubiquinone. This Drosophila mauritiana (Fruit fly) protein is NADH-ubiquinone oxidoreductase chain 2 (mt:ND2).